A 547-amino-acid polypeptide reads, in one-letter code: ATP synthase subunit alpha (547 aa).

Position 172–179 (172–179) interacts with ATP; the sequence is GDRKTGKT.

It belongs to the ATPase alpha/beta chains family. In terms of assembly, F-type ATPases have 2 components, CF(1) - the catalytic core - and CF(0) - the membrane proton channel. CF(1) has five subunits: alpha(3), beta(3), gamma(1), delta(1), epsilon(1). CF(0) has three main subunits: a(1), b(2) and c(9-12). The alpha and beta chains form an alternating ring which encloses part of the gamma chain. CF(1) is attached to CF(0) by a central stalk formed by the gamma and epsilon chains, while a peripheral stalk is formed by the delta and b chains.

Its subcellular location is the cell membrane. It carries out the reaction ATP + H2O + 4 H(+)(in) = ADP + phosphate + 5 H(+)(out). Functionally, produces ATP from ADP in the presence of a proton gradient across the membrane. The alpha chain is a regulatory subunit. The sequence is that of ATP synthase subunit alpha from Corynebacterium glutamicum (strain R).